The following is an 85-amino-acid chain: Small ribosomal subunit protein bS16 (85 aa).

It belongs to the bacterial ribosomal protein bS16 family.

In Buchnera aphidicola subsp. Schizaphis graminum (strain Sg), this protein is Small ribosomal subunit protein bS16.